The primary structure comprises 242 residues: Glucosamine-6-phosphate deaminase (242 aa).

Aspartate 67 serves as the catalytic Proton acceptor; for enolization step. The For ring-opening step role is filled by asparagine 136. Catalysis depends on histidine 138, which acts as the Proton acceptor; for ring-opening step. The active-site For ring-opening step is the glutamate 143.

Belongs to the glucosamine/galactosamine-6-phosphate isomerase family. NagB subfamily.

It catalyses the reaction alpha-D-glucosamine 6-phosphate + H2O = beta-D-fructose 6-phosphate + NH4(+). The protein operates within amino-sugar metabolism; N-acetylneuraminate degradation; D-fructose 6-phosphate from N-acetylneuraminate: step 5/5. Its function is as follows. Catalyzes the reversible isomerization-deamination of glucosamine 6-phosphate (GlcN6P) to form fructose 6-phosphate (Fru6P) and ammonium ion. This chain is Glucosamine-6-phosphate deaminase, found in Clostridium beijerinckii (strain ATCC 51743 / NCIMB 8052) (Clostridium acetobutylicum).